The sequence spans 289 residues: Enoyl-CoA delta isomerase 1, mitochondrial (289 aa).

A mitochondrion-targeting transit peptide spans 1-28 (MALAAARRVLLQAGSRLGRRGAVDGARR). An N6-acetyllysine; alternate modification is found at K48. K48 bears the N6-succinyllysine; alternate mark. K71 carries the post-translational modification N6-succinyllysine. An N6-acetyllysine modification is found at K76. Substrate contacts are provided by residues 93–97 (AGLDL), G140, and N164. An N6-acetyllysine; alternate mark is found at K222, K229, and K255. Residues K222, K229, and K255 each carry the N6-succinyllysine; alternate modification. N6-succinyllysine is present on K275. At K283 the chain carries N6-acetyllysine; alternate. K283 is subject to N6-succinyllysine; alternate.

This sequence belongs to the enoyl-CoA hydratase/isomerase family. As to quaternary structure, homotrimer.

The protein localises to the mitochondrion matrix. It carries out the reaction a (3Z)-enoyl-CoA = a 4-saturated (2E)-enoyl-CoA. The enzyme catalyses a (3E)-enoyl-CoA = a 4-saturated (2E)-enoyl-CoA. It catalyses the reaction (3Z)-octenoyl-CoA = (2E)-octenoyl-CoA. The catalysed reaction is (2E)-tetradecenoyl-CoA = (3Z)-tetradecenoyl-CoA. It carries out the reaction (3Z)-dodecenoyl-CoA = (2E)-dodecenoyl-CoA. The enzyme catalyses (3Z)-hexenoyl-CoA = (2E)-hexenoyl-CoA. It catalyses the reaction (3Z)-decenoyl-CoA = (2E)-decenoyl-CoA. Its pathway is lipid metabolism; fatty acid beta-oxidation. In terms of biological role, key enzyme of fatty acid beta-oxidation. Able to isomerize both 3-cis (3Z) and 3-trans (3E) double bonds into the 2-trans (2E) form in a range of enoyl-CoA species, with a preference for (3Z)-enoyl-CoAs over (3E)-enoyl-CoAs. The catalytic efficiency of this enzyme is not affected by the fatty acyl chain length. The protein is Enoyl-CoA delta isomerase 1, mitochondrial of Rattus norvegicus (Rat).